The primary structure comprises 88 residues: UPF0297 protein GK2555 (88 aa).

It belongs to the UPF0297 family.

The chain is UPF0297 protein GK2555 from Geobacillus kaustophilus (strain HTA426).